Here is a 164-residue protein sequence, read N- to C-terminus: Ribosome maturation factor RimM (164 aa).

The PRC barrel domain maps to P92–I164.

It belongs to the RimM family. As to quaternary structure, binds ribosomal protein uS19.

It is found in the cytoplasm. Functionally, an accessory protein needed during the final step in the assembly of 30S ribosomal subunit, possibly for assembly of the head region. Essential for efficient processing of 16S rRNA. May be needed both before and after RbfA during the maturation of 16S rRNA. It has affinity for free ribosomal 30S subunits but not for 70S ribosomes. This is Ribosome maturation factor RimM from Orientia tsutsugamushi (strain Ikeda) (Rickettsia tsutsugamushi).